The sequence spans 110 residues: UPF0060 membrane protein Pfl01_4105 (110 aa).

4 helical membrane passes run 5-25 (LWFFLAALFEIAGCFAFWMWL), 28-48 (GKSALWVIPALISLTLFALLL), 59-79 (AYAAYGGIYIIASIGWLAVVE), and 84-104 (LGSDWIGVALCVIGATVILFG).

It belongs to the UPF0060 family.

The protein resides in the cell inner membrane. This Pseudomonas fluorescens (strain Pf0-1) protein is UPF0060 membrane protein Pfl01_4105.